A 643-amino-acid polypeptide reads, in one-letter code: Phosphomethylpyrimidine synthase (643 aa).

Residues Asn-221, Met-250, Tyr-279, His-315, 335 to 337 (SRG), 376 to 379 (DGLR), and Glu-415 contribute to the substrate site. His-419 contributes to the Zn(2+) binding site. Tyr-442 contributes to the substrate binding site. Position 483 (His-483) interacts with Zn(2+). [4Fe-4S] cluster contacts are provided by Cys-563, Cys-566, and Cys-571.

The protein belongs to the ThiC family. Homodimer. [4Fe-4S] cluster serves as cofactor.

The catalysed reaction is 5-amino-1-(5-phospho-beta-D-ribosyl)imidazole + S-adenosyl-L-methionine = 4-amino-2-methyl-5-(phosphooxymethyl)pyrimidine + CO + 5'-deoxyadenosine + formate + L-methionine + 3 H(+). It functions in the pathway cofactor biosynthesis; thiamine diphosphate biosynthesis. Functionally, catalyzes the synthesis of the hydroxymethylpyrimidine phosphate (HMP-P) moiety of thiamine from aminoimidazole ribotide (AIR) in a radical S-adenosyl-L-methionine (SAM)-dependent reaction. In Nitrobacter hamburgensis (strain DSM 10229 / NCIMB 13809 / X14), this protein is Phosphomethylpyrimidine synthase.